A 246-amino-acid polypeptide reads, in one-letter code: Probable transcriptional regulatory protein GWCH70_2524 (246 aa).

This sequence belongs to the TACO1 family.

The protein localises to the cytoplasm. The polypeptide is Probable transcriptional regulatory protein GWCH70_2524 (Geobacillus sp. (strain WCH70)).